The following is an 86-amino-acid chain: Muscarinic toxin 38 (86 aa).

A signal peptide spans 1–21; that stretch reads MKTLLLTLVVVTIVCLDLGYT. Intrachain disulfides connect Cys24/Cys45, Cys38/Cys63, Cys67/Cys78, and Cys79/Cys84.

The protein belongs to the three-finger toxin family. Short-chain subfamily. Aminergic toxin sub-subfamily. In terms of assembly, monomer. As to expression, expressed by the venom gland.

The protein resides in the secreted. Functionally, binds to the muscarinic acetylcholine receptor (CHRM). The protein is Muscarinic toxin 38 of Ophiophagus hannah (King cobra).